The sequence spans 159 residues: Phosphopantetheine adenylyltransferase (159 aa).

Substrate is bound at residue Ser9. ATP-binding positions include 9–10 (SF) and His17. Residues Lys41, Leu73, and Lys87 each contribute to the substrate site. Residues 88 to 90 (GLR), Glu98, and 122 to 128 (YSFLSSS) each bind ATP.

Belongs to the bacterial CoaD family. Homohexamer. The cofactor is Mg(2+).

Its subcellular location is the cytoplasm. The enzyme catalyses (R)-4'-phosphopantetheine + ATP + H(+) = 3'-dephospho-CoA + diphosphate. Its pathway is cofactor biosynthesis; coenzyme A biosynthesis; CoA from (R)-pantothenate: step 4/5. Its function is as follows. Reversibly transfers an adenylyl group from ATP to 4'-phosphopantetheine, yielding dephospho-CoA (dPCoA) and pyrophosphate. The chain is Phosphopantetheine adenylyltransferase from Streptomyces coelicolor (strain ATCC BAA-471 / A3(2) / M145).